Consider the following 84-residue polypeptide: MNYLVMISFALLLMKGVESVRDAYIAKPENCVYHCAGNEGCNKLCTDNGAESGYCQWGGRYGNACWCIKLPDDVPIRVPGKCHR.

The first 19 residues, 1–19 (MNYLVMISFALLLMKGVES), serve as a signal peptide directing secretion. The region spanning 21 to 83 (RDAYIAKPEN…VPIRVPGKCH (63 aa)) is the LCN-type CS-alpha/beta domain. 4 disulfide bridges follow: Cys31–Cys82, Cys35–Cys55, Cys41–Cys65, and Cys45–Cys67. Position 84 (Arg84) is a propeptide, removed by a carboxypeptidase.

This sequence belongs to the long (4 C-C) scorpion toxin superfamily. Sodium channel inhibitor family. Alpha subfamily. As to expression, expressed by the venom gland.

Its subcellular location is the secreted. Its function is as follows. Alpha toxins bind voltage-independently at site-3 of sodium channels (Nav) and inhibit the inactivation of the activated channels, thereby blocking neuronal transmission. This toxin is active against mammals. The chain is Toxin BmKaTx13 from Olivierus martensii (Manchurian scorpion).